Consider the following 647-residue polypeptide: DNA mismatch repair protein MutL (647 aa).

The protein belongs to the DNA mismatch repair MutL/HexB family.

Functionally, this protein is involved in the repair of mismatches in DNA. It is required for dam-dependent methyl-directed DNA mismatch repair. May act as a 'molecular matchmaker', a protein that promotes the formation of a stable complex between two or more DNA-binding proteins in an ATP-dependent manner without itself being part of a final effector complex. The protein is DNA mismatch repair protein MutL of Bacillus cereus (strain ATCC 10987 / NRS 248).